A 185-amino-acid polypeptide reads, in one-letter code: Elongation factor P (185 aa).

This sequence belongs to the elongation factor P family.

It localises to the cytoplasm. Its pathway is protein biosynthesis; polypeptide chain elongation. Its function is as follows. Involved in peptide bond synthesis. Stimulates efficient translation and peptide-bond synthesis on native or reconstituted 70S ribosomes in vitro. Probably functions indirectly by altering the affinity of the ribosome for aminoacyl-tRNA, thus increasing their reactivity as acceptors for peptidyl transferase. The sequence is that of Elongation factor P from Azoarcus sp. (strain BH72).